Reading from the N-terminus, the 92-residue chain is MYGLINIGFGNVIAGDRVIAIVNPESSPLKRMKDEAKIEGKLIDATYGRKTRSIIITDSNHIILSAIQPETIAQRFMENFYEIEKTLREGKK.

This sequence belongs to the RemA family.

This is Putative regulatory protein CTN_0877 from Thermotoga neapolitana (strain ATCC 49049 / DSM 4359 / NBRC 107923 / NS-E).